The primary structure comprises 430 residues: Replication factor C large subunit (430 aa).

An ATP-binding site is contributed by 75–82; that stretch reads GPPGTGKT.

It belongs to the activator 1 small subunits family. RfcL subfamily. Heteromultimer composed of small subunits (RfcS) and large subunits (RfcL).

Part of the RFC clamp loader complex which loads the PCNA sliding clamp onto DNA. In Nanoarchaeum equitans (strain Kin4-M), this protein is Replication factor C large subunit.